The chain runs to 256 residues: Follistatin-related protein 3 (256 aa).

Residues 1-23 form the signal peptide; that stretch reads MRPGALWPLLWGALVWAVGSVGA. The 72-residue stretch at 34–105 folds into the TB domain; sequence GVCWLQQGKE…SCDGVECGPG (72 aa). 8 disulfide bridges follow: Cys36–Cys59, Cys46–Cys90, Cys60–Cys93, Cys97–Cys108, Cys102–Cys117, Cys119–Cys151, Cys123–Cys144, and Cys133–Cys165. An N-linked (GlcNAc...) asparagine glycan is attached at Asn71. A Follistatin-like 1 domain is found at 97 to 117; it reads CDGVECGPGKACRMLGGRPHC. 2 Kazal-like domains span residues 111–167 and 187–243; these read LGGR…RCQK and SAHC…ICTG. In terms of domain architecture, Follistatin-like 2 spans 168 to 191; it reads SCAQVVCPRPQSCLVDQTGSAHCV. Intrachain disulfides connect Cys193–Cys227, Cys198–Cys220, and Cys209–Cys241. N-linked (GlcNAc...) asparagine glycosylation occurs at Asn213.

In terms of assembly, interacts with INHBA and INHBB. Interacts with FN1. Interacts with ADAM12. Interacts with MLLT10; the interaction enhances MLLT10 in vitro transcriptional activity and self-association. Interacts with MSTN.

It is found in the secreted. The protein localises to the nucleus. Its function is as follows. The secreted form is a binding and antagonizing protein for members of the TGF-beta family, such as activin, BMP2 and MSTN. Inhibits activin A-, activin B-, BMP2- and MSDT-induced cellular signaling; more effective on activin A than on activin B. Involved in bone formation; inhibits osteoclast differentiation. Involved in hematopoiesis; involved in differentiation of hemopoietic progenitor cells, increases hematopoietic cell adhesion to fibronectin and seems to contribute to the adhesion of hematopoietic precursor cells to the bone marrow stroma. The nuclear form is probably involved in transcriptional regulation via interaction with MLLT10. The polypeptide is Follistatin-related protein 3 (Fstl3) (Rattus norvegicus (Rat)).